Here is a 345-residue protein sequence, read N- to C-terminus: Tubulin-folding cofactor C (345 aa).

An N-acetylmethionine modification is found at methionine 1. Residues methionine 1 to alanine 10 are compositionally biased toward polar residues. Residues methionine 1–serine 83 are disordered. Over residues aspartate 23 to serine 39 the composition is skewed to basic and acidic residues. Residues proline 40–serine 55 show a composition bias toward low complexity. The segment covering serine 61 to glutamate 73 has biased composition (basic and acidic residues). Residues serine 74–serine 83 show a composition bias toward low complexity. The 150-residue stretch at proline 169–tryptophan 318 folds into the C-CAP/cofactor C-like domain.

Belongs to the TBCC family. In terms of assembly, supercomplex made of cofactors A to E. Cofactors A and D function by capturing and stabilizing tubulin in a quasi-native conformation. Cofactor E binds to the cofactor D-tubulin complex; interaction with cofactor C then causes the release of tubulin polypeptides that are committed to the native state. As to expression, ubiquitously expressed (at protein level). Present in leaves, roots, flowers, and stems.

It localises to the cytoplasm. In terms of biological role, essential tubulin-folding protein involved in the final step of the tubulin folding pathway. Required for continuous microtubule cytoskeleton organization, mitotic division, cytokinesis, and to couple cell cycle progression to cell division in embryos and endosperms. Not essential for cell viability. Binds probably to the multimeric supercomplex, stimulating GTP hydrolysis by the bound beta-tubulin and the release of the alpha-/beta-tubulin heterodimer. The protein is Tubulin-folding cofactor C (TFCC) of Arabidopsis thaliana (Mouse-ear cress).